The sequence spans 353 residues: Endophilin-A1 (353 aa).

A membrane-binding amphipathic helix region spans residues 1-21 (MSVAGLKKQFHKATQKVSEKV). The disordered stretch occupies residues 1-27 (MSVAGLKKQFHKATQKVSEKVGGAEGT). Positions 1–125 (MSVAGLKKQF…DVGEAMKELS (125 aa)) are binds and tubulates liposomes. The region spanning 18-249 (SEKVGGAEGT…LEDRIKEASS (232 aa)) is the BAR domain. Residues 60–87 (PNPASRAKLSMINTMSKIRGQEKGPGYP) form a required for dimerization upon membrane association region. Positions 181 to 201 (EELRQALEKFDESKEIAESSM) form a coiled coil. A compositionally biased stretch (basic and acidic residues) spans 243–257 (RIKEASSQPKREYQP). Residues 243–290 (RIKEASSQPKREYQPKPRMSLDFTSGGDNTQHNGGISHATTPKPAGAH) are disordered. Residues 264-282 (DFTSGGDNTQHNGGISHAT) show a composition bias toward polar residues. The 60-residue stretch at 291-350 (MDQPCCRALYDFEPENEGELGFKEGDIITLTNQIDENWYEGMLHGQSGFFPINYVDILVP) folds into the SH3 domain.

It belongs to the endophilin family. Monomer; in cytoplasm. Homodimer; when associated with membranes. Associates with MAP4K3. This interaction appears to regulate MAP4K3-mediated JNK activation. Interacts with SYNJ1 and DNM1. In terms of tissue distribution, highly expressed in brain.

It localises to the cytoplasm. Its subcellular location is the membrane. The protein localises to the early endosome. The protein resides in the presynapse. Functionally, implicated in synaptic vesicle endocytosis. May recruit other proteins to membranes with high curvature. In Gallus gallus (Chicken), this protein is Endophilin-A1.